The sequence spans 855 residues: Mitofusin FZO1 (855 aa).

Residues methionine 1–threonine 19 show a composition bias toward basic and acidic residues. The disordered stretch occupies residues methionine 1–threonine 27. Residues methionine 1–proline 705 lie on the Cytoplasmic side of the membrane. The interval asparagine 91–valine 190 is HRN. The 284-residue stretch at aspartate 184–proline 467 folds into the Dynamin-type G domain. GTP is bound by residues asparagine 197–alanine 202 and lysine 370–aspartate 373. A Glycyl lysine isopeptide (Lys-Gly) (interchain with G-Cter in ubiquitin) cross-link involves residue lysine 398. Position 408 (serine 408) interacts with GTP. The span at glutamate 413–aspartate 433 shows a compositional bias: basic and acidic residues. A disordered region spans residues glutamate 413–serine 447. Residue lysine 464 forms a Glycyl lysine isopeptide (Lys-Gly) (interchain with G-Cter in ubiquitin) linkage. The HR1 stretch occupies residues lysine 484–valine 547. Residues glycine 630 to glutamine 843 are required for interaction with UGO1. A helical transmembrane segment spans residues threonine 706–isoleucine 726. Topologically, residues lysine 727–lysine 736 are mitochondrial intermembrane. The helical transmembrane segment at leucine 737–leucine 757 threads the bilayer. Topologically, residues proline 758 to aspartate 855 are cytoplasmic. Positions tyrosine 769–lysine 831 are HR2. Residues threonine 798–serine 825 adopt a coiled-coil conformation.

Belongs to the TRAFAC class dynamin-like GTPase superfamily. Dynamin/Fzo/YdjA family. Mitofusin subfamily. In terms of assembly, homodimer. Dimerization depends on GTP binding. Component of a large multiprotein complex of 800 kDa. Binds the cytoplasmic domain of UGO1 which binds MGM1 through its intermembrane space domain. Interacts with MDM30. Interacts with UBP2 and UBP12. Interacts (when ubiquitinated) with DOA1; the interaction recruits FZO1 to CDC48 and promotes FZO1 proteasomal degradation. Ubiquitinated at Lys-398 and Lys-464. MDM30 and UGO1 are involved in ubiquitination. Deubiquitinated by UBP2 and UBP12. UBP2 and UBP12 recognize distinct ubiquitin chains on FZO1 that have opposing effects on mitochondrial fusion. UBP2 removes ubiquitin chains that initiate proteolysis of FZO1 and inhibit fusion. UBP12 recognizes ubiquitin chains that stabilize FZO1 and promote mitochondrial fusion. UBP12 deubiquitylates FZO1 only after oligomerization.

It is found in the mitochondrion outer membrane. It carries out the reaction GTP + H2O = GDP + phosphate + H(+). Functionally, essential transmembrane GTPase, which mediates mitochondrial fusion. Fusion proceeds through several steps; first mitochondria are tethered together, then brought into close contact, followed by the formation of a docking ring around contact areas, and finally membrane fusion. Fusion of mitochondria occurs in many cell types and constitutes an important step in mitochondrial morphology, which is balanced between fusion and fission, mediated by FZO1 and DNM1, respectively. Functions antagonistically with DNM1. Probably acts by forming membrane contact sites that mediate mitochondrial membrane fusion. Mitochondrial docking and fusion requires GTP hydrolysis. Mitochondrial fusion also promotes increased lifespan. This is Mitofusin FZO1 (FZO1) from Saccharomyces cerevisiae (strain ATCC 204508 / S288c) (Baker's yeast).